The sequence spans 340 residues: Phenylalanine--tRNA ligase alpha subunit (340 aa).

E255 contributes to the Mg(2+) binding site.

The protein belongs to the class-II aminoacyl-tRNA synthetase family. Phe-tRNA synthetase alpha subunit type 1 subfamily. As to quaternary structure, tetramer of two alpha and two beta subunits. Mg(2+) serves as cofactor.

Its subcellular location is the cytoplasm. The enzyme catalyses tRNA(Phe) + L-phenylalanine + ATP = L-phenylalanyl-tRNA(Phe) + AMP + diphosphate + H(+). The polypeptide is Phenylalanine--tRNA ligase alpha subunit (Desulforamulus reducens (strain ATCC BAA-1160 / DSM 100696 / MI-1) (Desulfotomaculum reducens)).